Reading from the N-terminus, the 155-residue chain is MKLQLCAVGRLRSGPERDLVEDYLARFERTGRPLGLPAVQLLELEDRKGGGMEAEADLIAKAVAPGAALVVLDERGRTLSSPEFADHLAHWRDSGRDVALAIGGADGLAPRLRDRADLAISLGRMVWPHMLVRVMLAEQLYRAATILAGSPYHRV.

Residues leucine 72, glycine 103, and leucine 122–tryptophan 127 each bind S-adenosyl-L-methionine.

Belongs to the RNA methyltransferase RlmH family. In terms of assembly, homodimer.

It localises to the cytoplasm. It catalyses the reaction pseudouridine(1915) in 23S rRNA + S-adenosyl-L-methionine = N(3)-methylpseudouridine(1915) in 23S rRNA + S-adenosyl-L-homocysteine + H(+). Specifically methylates the pseudouridine at position 1915 (m3Psi1915) in 23S rRNA. The polypeptide is Ribosomal RNA large subunit methyltransferase H (Cereibacter sphaeroides (strain KD131 / KCTC 12085) (Rhodobacter sphaeroides)).